The following is a 63-amino-acid chain: Large ribosomal subunit protein uL29 (63 aa).

This sequence belongs to the universal ribosomal protein uL29 family.

The sequence is that of Large ribosomal subunit protein uL29 from Bordetella pertussis (strain Tohama I / ATCC BAA-589 / NCTC 13251).